The following is a 115-amino-acid chain: Arsenic resistance transcriptional regulator ArsR2 (115 aa).

Residues 1–90 (MITPPDVFKS…EMLQVTLQAN (90 aa)) enclose the HTH arsR-type domain. Arsenite contacts are provided by C30 and C32. Residues 31–54 (VCELMCALNDSQPKISRHLAQLRS) constitute a DNA-binding region (H-T-H motif).

In terms of assembly, homodimer.

Its subcellular location is the cytoplasm. Functionally, binds arsenite and regulates the expression of arsenic efflux pumps. In vitro, also binds antimony and bismuth, but not arsenate. This is Arsenic resistance transcriptional regulator ArsR2 from Pseudomonas putida (strain ATCC 47054 / DSM 6125 / CFBP 8728 / NCIMB 11950 / KT2440).